The primary structure comprises 1136 residues: MNSGYPLANDLQGSMKNTNYKDWLAMCENNQQYGVNPAAINSSSVSTALKVAGAILKFVNPPAGTVLTVLSAVLPILWPTNTPTPERVWNDFMTNTGNLIDQTVTAYVRTDANAKMTVVKDYLDQYTTKFNTWKREPNNQSYRTAVITQFNLTSAKLRETAVYFSNLVGYELLLLPIYAQVANFNLLLIRDGLINAQEWSLARSAGDQLYNTMVQYTKEYIAHSITWYNKGLDVLRNKSNGQWITFNDYKREMTIQVLDILALFASYDPRRYPADKIDNTKLSKTEFTREIYTALVESPSSKSIAALEAALTRDVHLFTWLKRVDFWTNTIYQDLRFLSANKIGFSYTNSSAMQESGIYGSSGFGSNLTHQIQLNSNVYKTSITDTSSPSNRVTKMDFYKIDGTLASYNSNITPTPEGLRTTFFGFSTNENTPNQPTVNDYTHILSYIKTDVIDYNSNRVSFAWTHKIVDPNNQIYTDAITQVPAVKSNFLNATAKVIKGPGHTGGDLVALTSNGTLSGRMEIQCKTSIFNDPTRSYGLRIRYAANSPIVLNVSYVLQGVSRGTTISTESTFSRPNNIIPTDLKYEEFRYKDPFDAIVPMRLSSNQLITIAIQPLNMTSNNQVIIDRIEIIPITQSVLDETENQNLESEREVVNALFTNDAKDALNIGTTDYDIDQAANLVECISEELYPKEKMLLLDEVKNAKQLSQSRNVLQNGDFESATLGWTTSDNITIQEDDPIFKGHYLHMSGARDIDGTIFPTYIFQKIDESKLKPYTRYLVRGFVGSSKDVELVVSRYGEEIDAIMNVPADLNYLYPSTFDCEGSNRCETSAVPANIGNTSDMLYSCQYDTGKKHVVCQDSHQFSFTIDTGALDTNENIGVWVMFKISSPDGYASLDNLEVIEEGPIDGEALSRVKHMEKKWNDQMEAKRSETQQAYDVAKQAIDALFTNVQDEALQFDTTLAQIQYAEYLVQSIPYVYNDWLSDVPGMNYDIYVELDARVAQARYLYDTRNIIKNGDFTQGVMGWHVTGNADVQQIDGVSVLVLSNWSAGVSQNVHLQHNHGYVLRVIAKKEGPGNGYVTLMDCEENQEKLTFTSCEEGYITKTVDVFPDTDRVRIEIGETEGSFYIESIELICMNE.

Positions 84 to 282 are domain I; the sequence is TPERVWNDFM…PADKIDNTKL (199 aa). The domain II stretch occupies residues 283–466; it reads SKTEFTREIY…SNRVSFAWTH (184 aa). The interval 467-641 is domain III; sequence KIVDPNNQIY…PITQSVLDET (175 aa).

The protein belongs to the delta endotoxin family. In the presence of micelles active toxin forms oligomers that can be fit into cryo-EM maps as trimers. Binds to host (A.gambiae) cadherin AgCad1 (also called BT-R3), probably on the cell surface. Activated toxin may bind its host AgCad1 receptor as a monomer, but also forms an oligomer that is not active. It depends on Mg(2+) as a cofactor. Treatment of recombinant protein with A.aegypti 3rd instar larvae midgut extract for 1 hour yields major bands of 72 and 45 kDa, the combined proteins are toxic to mosquitoes. Longer digestion, which removes the 72 kDa protein, yields a non-toxic preparation. Proteolysis by yields a 65 kDa toxic protein and 48 and 17 kDa fragments which are not toxic. In terms of tissue distribution, host (A.gambiae) larval midgut; binds to host brush border membranes, probably to cadherin-AgCad1 (Cad1, also called BT-R3).

It localises to the spore. Its activity is regulated as follows. Toxic activity on Trichoplusia ni insect cells stably transfected with the AgCad1/BT-R3 receptor leads to oncosis, cell death characterized by cell swelling, membrane blebbing and depletion of energy reserves. Cell death is blocked by EDTA (but not EGTA) and is partially prevented by pretreatment with NF449 (inhibits G-s-alpha-60A and adenylyl cyclase, AC) and 2',5'-dideoxyadenosine 3'-diphosphate (ddADP, inhibits AC), while H-89 and PKAI 14-22 (both inhibit protein kinase A), ouabain (inhibits Na+/K+-ATPase) and a cell exocytosis inhibitor (Exo1) nearly completely prevent the action of the toxin in this system. The cAMP analog pCPT-cAMP and the AC activator FSK enhance toxicity. Its function is as follows. A pesticidal protein active against Aedes and Anopheles mosquito species; activity on Culex species is strain dependent. It remains toxic to permethrin-resistant strains of A.gambiae. Following activation of the protoxin by mosquito larvae midgut extract (or by chymotrypsin or trypsin treatment) it becomes insecticidal. Causes mosquito cell death by activating a host G-protein-coupled receptor which subsequently activates adenylyl cyclase and increases cAMP production. cAMP activates protein kinase A which sets off a series of downstream events which includes increased exocytosis (probably bringing more receptor to the cell membrane), Na+/K+-ATPase activation and eventual host cell death. Another group suggests that alkaline phosphatase serves as the insect receptor and that the protein forms pores in insect cell membranes. The sequence is that of Pesticidal crystal protein Cry4B protoxin from Bacillus thuringiensis subsp. israelensis.